A 227-amino-acid chain; its full sequence is MICOS complex subunit Mic19 (227 aa).

A lipid anchor (N-myristoyl glycine) is attached at glycine 2. Serine 29 is modified (phosphoserine). The interval 32–57 (VIDRMKESSPSGSKSQRYSSVYGASV) is disordered. Over residues 39 to 50 (SSPSGSKSQRYS) the composition is skewed to polar residues. Tyrosine 49 is subject to Phosphotyrosine. 4 positions are modified to phosphoserine: serine 50, serine 51, serine 56, and serine 58. The segment at 73-92 (EQAKKESEHQRRLKQARDLE) is disordered. Lysine 142 carries the post-translational modification N6-acetyllysine. The region spanning 180-222 (HPVCADLQTKILQCYRQNTQQTLSCSALASQYMHCVNHAKQSM) is the CHCH domain. 2 consecutive short sequence motifs (cx9C motif) follow at residues 183 to 193 (CADLQTKILQC) and 204 to 214 (CSALASQYMHC). 2 cysteine pairs are disulfide-bonded: cysteine 183–cysteine 214 and cysteine 193–cysteine 204.

The protein belongs to the MICOS complex subunit Mic19 family. Metazoan Mic19 subfamily. As to quaternary structure, component of the mitochondrial contact site and cristae organizing system (MICOS) complex, composed of at least MICOS10/MIC10, CHCHD3/MIC19, CHCHD6/MIC25, APOOL/MIC27, IMMT/MIC60, APOO/MIC23/MIC26 and MICOS13/MIC13. This complex was also known under the names MINOS or MitOS complex. The MICOS complex associates with mitochondrial outer membrane proteins SAMM50, MTX1 and MTX2 (together described as components of the mitochondrial outer membrane sorting assembly machinery (SAM) complex) and DNAJC11, mitochondrial inner membrane protein TMEM11 and with HSPA9. The MICOS and SAM complexes together with DNAJC11 are part of a large protein complex spanning both membranes termed the mitochondrial intermembrane space bridging (MIB) complex. Interacts with HSPA1A/HSPA1B and OPA1, preferentially with the soluble OPA1 form.

The protein resides in the mitochondrion inner membrane. The protein localises to the cytoplasm. Its subcellular location is the nucleus. It is found in the mitochondrion. Component of the MICOS complex, a large protein complex of the mitochondrial inner membrane that plays crucial roles in the maintenance of crista junctions, inner membrane architecture, and formation of contact sites to the outer membrane. Has also been shown to function as a transcription factor which binds to the BAG1 promoter and represses BAG1 transcription. Plays an important role in the maintenance of the MICOS complex stability and the mitochondrial cristae morphology. This chain is MICOS complex subunit Mic19 (Chchd3), found in Mus musculus (Mouse).